Consider the following 472-residue polypeptide: Uronate isomerase (472 aa).

Belongs to the metallo-dependent hydrolases superfamily. Uronate isomerase family.

It carries out the reaction D-glucuronate = D-fructuronate. The enzyme catalyses aldehydo-D-galacturonate = keto-D-tagaturonate. It functions in the pathway carbohydrate metabolism; pentose and glucuronate interconversion. This chain is Uronate isomerase, found in Opitutus terrae (strain DSM 11246 / JCM 15787 / PB90-1).